We begin with the raw amino-acid sequence, 109 residues long: Large ribosomal subunit protein uL22 (109 aa).

The protein belongs to the universal ribosomal protein uL22 family. In terms of assembly, part of the 50S ribosomal subunit.

Functionally, this protein binds specifically to 23S rRNA; its binding is stimulated by other ribosomal proteins, e.g. L4, L17, and L20. It is important during the early stages of 50S assembly. It makes multiple contacts with different domains of the 23S rRNA in the assembled 50S subunit and ribosome. In terms of biological role, the globular domain of the protein is located near the polypeptide exit tunnel on the outside of the subunit, while an extended beta-hairpin is found that lines the wall of the exit tunnel in the center of the 70S ribosome. This is Large ribosomal subunit protein uL22 from Paraburkholderia phymatum (strain DSM 17167 / CIP 108236 / LMG 21445 / STM815) (Burkholderia phymatum).